The chain runs to 336 residues: MKIALDAMGGDYAPLETTKGALEAIKESNITVVLVGKEEELQKILKDYEYDKSRIEIVNAEEVIEMHEHPAFAVKEKENSSIVKAIKLLKERKVDGAVSAGNTGAVMSSALLYLGRIKGIKRPAISTLIPTLTEVPSIILDIGANVDCKKEYLEQFALMGKIYMEEVFNIKDPKIALLNIGEEEGKGNQLAQETYNLLKNNPIFNFIGNVEGKDLFKGIANVIVCDGFVGNIAIKTAEGVAETLFELLSSEIKSSLWSTILGMLLKPKFKNVKKKLDYSEFGGAPLLGVDGTVIISHGRSKAKAIKNALKLAEKVVKLEINRKILEGLSKITDRGD.

The protein belongs to the PlsX family. Homodimer. Probably interacts with PlsY.

The protein resides in the cytoplasm. It carries out the reaction a fatty acyl-[ACP] + phosphate = an acyl phosphate + holo-[ACP]. The protein operates within lipid metabolism; phospholipid metabolism. Its function is as follows. Catalyzes the reversible formation of acyl-phosphate (acyl-PO(4)) from acyl-[acyl-carrier-protein] (acyl-ACP). This enzyme utilizes acyl-ACP as fatty acyl donor, but not acyl-CoA. In Dictyoglomus thermophilum (strain ATCC 35947 / DSM 3960 / H-6-12), this protein is Phosphate acyltransferase.